Reading from the N-terminus, the 518-residue chain is MIPDVSQALAWLEKHPQALKGIQRGLERETLRVNADGTQATTGHPEALGSALTHKWITTDFAEALLEFITPVDGDIEHMLTFMRDLHRYTARNMGDERMWPLSMPCYIAEGQDIELAQYGTSNTGRFKTLYREGLKNRYGALMQTISGVHYNFSLPMAFWQAKCCDISGTDAKEKISAGYFRVIRNYYRFGWVIPYLFGASPAICSSFLQGKPTSLPFEKTECGMYYLPYATSLRLSDLGYTNKSQSNLGITFNDLYEYVAGLKQAIKTPSEEYAKIGIEKDGKRLQINSNVLQIENELYAPIRPKRVTRSGESPSDALLRGGIEYIEVRSLDINPFSPIGVDEQQVRFLDLFMVWCALADAPEMSSSELACTRVNWNRVILEGRKPGLTLGIGCETAQFPLPQVGKDLFRDLKRVAQTLDSINGGKAYQKVCDELVACFDNPDLTFSARILRSMIDTGIGGTGKAFAEAYRNLLREEPLEILREEDFVAEREASERRQQEMETADTEPFAVWLEKHA.

The protein belongs to the glutamate--cysteine ligase type 1 family. Type 1 subfamily.

The catalysed reaction is L-cysteine + L-glutamate + ATP = gamma-L-glutamyl-L-cysteine + ADP + phosphate + H(+). It functions in the pathway sulfur metabolism; glutathione biosynthesis; glutathione from L-cysteine and L-glutamate: step 1/2. The protein is Glutamate--cysteine ligase of Shigella boydii serotype 4 (strain Sb227).